We begin with the raw amino-acid sequence, 182 residues long: Adenine phosphoribosyltransferase (182 aa).

It belongs to the purine/pyrimidine phosphoribosyltransferase family. Homodimer.

The protein localises to the cytoplasm. The catalysed reaction is AMP + diphosphate = 5-phospho-alpha-D-ribose 1-diphosphate + adenine. It functions in the pathway purine metabolism; AMP biosynthesis via salvage pathway; AMP from adenine: step 1/1. Functionally, catalyzes a salvage reaction resulting in the formation of AMP, that is energically less costly than de novo synthesis. The chain is Adenine phosphoribosyltransferase from Streptomyces galbus.